The sequence spans 705 residues: Polyribonucleotide nucleotidyltransferase (705 aa).

Mg(2+) contacts are provided by D486 and D492. The KH domain occupies 553–612 (PRIYTMKINPEKIKDVIGKGGSVIRALTDETGTTIEIEDDGTIKIAATDGDKAKHAIRRI). The S1 motif domain maps to 622–690 (GRIYAGKVTR…RQGRIRLSIK (69 aa)).

This sequence belongs to the polyribonucleotide nucleotidyltransferase family. In terms of assembly, component of the RNA degradosome, which is a multiprotein complex involved in RNA processing and mRNA degradation. Requires Mg(2+) as cofactor.

The protein resides in the cytoplasm. The enzyme catalyses RNA(n+1) + phosphate = RNA(n) + a ribonucleoside 5'-diphosphate. In terms of biological role, involved in mRNA degradation. Catalyzes the phosphorolysis of single-stranded polyribonucleotides processively in the 3'- to 5'-direction. The chain is Polyribonucleotide nucleotidyltransferase from Yersinia pestis bv. Antiqua (strain Nepal516).